We begin with the raw amino-acid sequence, 286 residues long: Small ribosomal subunit protein uS2 (286 aa).

Positions 213–286 (EEQAQNNKWA…GAQEGGEWGS (74 aa)) are disordered. Residues 227 to 241 (SPALSAAVPSSAAPV) are compositionally biased toward low complexity. Residues 244-270 (WSSSPSKETTEWGASNTAAAAKSSWSN) show a composition bias toward polar residues. A compositionally biased stretch (gly residues) spans 274-286 (GEWGAQEGGEWGS).

The protein belongs to the universal ribosomal protein uS2 family. As to quaternary structure, component of the small ribosomal subunit. Mature ribosomes consist of a small (40S) and a large (60S) subunit. The 40S subunit contains about 33 different proteins and 1 molecule of RNA (18S). The 60S subunit contains about 49 different proteins and 3 molecules of RNA (28S, 5.8S and 5S). Interacts with ribosomal protein S21.

It localises to the cytoplasm. Required for the assembly and/or stability of the 40S ribosomal subunit. Required for the processing of the 20S rRNA-precursor to mature 18S rRNA in a late step of the maturation of 40S ribosomal subunits. In Trichoplax adhaerens (Trichoplax reptans), this protein is Small ribosomal subunit protein uS2.